The chain runs to 474 residues: Glutamate--tRNA ligase (474 aa).

The short motif at 9-19 (PSPTGYLHVGG) is the 'HIGH' region element. The 'KMSKS' region signature appears at 240 to 244 (KLSKR). K243 serves as a coordination point for ATP.

The protein belongs to the class-I aminoacyl-tRNA synthetase family. Glutamate--tRNA ligase type 1 subfamily. Monomer.

It is found in the cytoplasm. It carries out the reaction tRNA(Glu) + L-glutamate + ATP = L-glutamyl-tRNA(Glu) + AMP + diphosphate. Functionally, catalyzes the attachment of glutamate to tRNA(Glu) in a two-step reaction: glutamate is first activated by ATP to form Glu-AMP and then transferred to the acceptor end of tRNA(Glu). This Vibrio parahaemolyticus serotype O3:K6 (strain RIMD 2210633) protein is Glutamate--tRNA ligase.